A 184-amino-acid chain; its full sequence is Protein GrpE (184 aa).

Residues 1 to 32 (MEEQKQTPSTPTPDTAAEAAVNAATAAPETAG) are disordered. Positions 12–32 (TPDTAAEAAVNAATAAPETAG) are enriched in low complexity.

Belongs to the GrpE family. As to quaternary structure, homodimer.

It is found in the cytoplasm. Its function is as follows. Participates actively in the response to hyperosmotic and heat shock by preventing the aggregation of stress-denatured proteins, in association with DnaK and GrpE. It is the nucleotide exchange factor for DnaK and may function as a thermosensor. Unfolded proteins bind initially to DnaJ; upon interaction with the DnaJ-bound protein, DnaK hydrolyzes its bound ATP, resulting in the formation of a stable complex. GrpE releases ADP from DnaK; ATP binding to DnaK triggers the release of the substrate protein, thus completing the reaction cycle. Several rounds of ATP-dependent interactions between DnaJ, DnaK and GrpE are required for fully efficient folding. The protein is Protein GrpE of Cupriavidus pinatubonensis (strain JMP 134 / LMG 1197) (Cupriavidus necator (strain JMP 134)).